Reading from the N-terminus, the 142-residue chain is Hemoglobin subunit alpha-A (142 aa).

The region spanning 2–142 is the Globin domain; the sequence is VLSGSDKTNV…VGNVLTAKYR (141 aa). H59 is an O2 binding site. H88 provides a ligand contact to heme b.

It belongs to the globin family. In terms of assembly, heterotetramer of two alpha chains and two beta chains. As to expression, red blood cells.

In terms of biological role, involved in oxygen transport from the lung to the various peripheral tissues. This is Hemoglobin subunit alpha-A (HBAA) from Ara ararauna (Blue-and-yellow macaw).